Reading from the N-terminus, the 139-residue chain is Large ribosomal subunit protein uL16 (139 aa).

A compositionally biased stretch (basic residues) spans 1–17 (MLQPKRTKYRKQQKGRM). The tract at residues 1-25 (MLQPKRTKYRKQQKGRMKGLSQRGH) is disordered.

This sequence belongs to the universal ribosomal protein uL16 family. Part of the 50S ribosomal subunit.

Its function is as follows. Binds 23S rRNA and is also seen to make contacts with the A and possibly P site tRNAs. The chain is Large ribosomal subunit protein uL16 from Christiangramia forsetii (strain DSM 17595 / CGMCC 1.15422 / KT0803) (Gramella forsetii).